A 306-amino-acid polypeptide reads, in one-letter code: Homoserine kinase (306 aa).

ATP is bound at residue 84–94; sequence PAGLGLGSSGA.

Belongs to the GHMP kinase family. Homoserine kinase subfamily.

The protein localises to the cytoplasm. The catalysed reaction is L-homoserine + ATP = O-phospho-L-homoserine + ADP + H(+). The protein operates within amino-acid biosynthesis; L-threonine biosynthesis; L-threonine from L-aspartate: step 4/5. Catalyzes the ATP-dependent phosphorylation of L-homoserine to L-homoserine phosphate. The sequence is that of Homoserine kinase from Sulfolobus acidocaldarius (strain ATCC 33909 / DSM 639 / JCM 8929 / NBRC 15157 / NCIMB 11770).